We begin with the raw amino-acid sequence, 283 residues long: MAVVTTRQLLESGVHFGHQTRRWNPKMKRFIFTERNGIYIIDLHQSLTYIDKAYAFVKETVAKGGQILFVGTKKQAQESIVEQATRVGMPYVNQRWLGGMLTNFQTISKRIARLKELEAMDFDKVSGSGLTKKELLMLSREKDKLEKDLGGIRDMPKVPQAVWVVDTKKEHLAIDEARKLKIPVVAILDTNCDPDEVDYAIPGNDDAIRSVSLLTRIIADAAAEGLMARSAGKSGEQPAEAEPMPDWERELLEGDGAKTEAKAEEPKAEAKKADEAPEAEKSN.

The disordered stretch occupies residues 229-283; the sequence is RSAGKSGEQPAEAEPMPDWERELLEGDGAKTEAKAEEPKAEAKKADEAPEAEKSN. The span at 246-283 shows a compositional bias: basic and acidic residues; the sequence is DWERELLEGDGAKTEAKAEEPKAEAKKADEAPEAEKSN.

This sequence belongs to the universal ribosomal protein uS2 family.

This Cutibacterium acnes (strain DSM 16379 / KPA171202) (Propionibacterium acnes) protein is Small ribosomal subunit protein uS2.